The sequence spans 485 residues: Cysteine--tRNA ligase (485 aa).

Cysteine 27 is a binding site for Zn(2+). The 'HIGH' region signature appears at 29–39 (ITAYDLCHIGH). Positions 208, 233, and 237 each coordinate Zn(2+). A 'KMSKS' region motif is present at residues 265 to 269 (KMSKS). Lysine 268 provides a ligand contact to ATP.

Belongs to the class-I aminoacyl-tRNA synthetase family. Monomer. Zn(2+) serves as cofactor.

The protein resides in the cytoplasm. It carries out the reaction tRNA(Cys) + L-cysteine + ATP = L-cysteinyl-tRNA(Cys) + AMP + diphosphate. This is Cysteine--tRNA ligase from Nitratidesulfovibrio vulgaris (strain DSM 19637 / Miyazaki F) (Desulfovibrio vulgaris).